We begin with the raw amino-acid sequence, 194 residues long: Adenine phosphoribosyltransferase (194 aa).

It belongs to the purine/pyrimidine phosphoribosyltransferase family. In terms of assembly, homodimer.

It localises to the cytoplasm. The enzyme catalyses AMP + diphosphate = 5-phospho-alpha-D-ribose 1-diphosphate + adenine. The protein operates within purine metabolism; AMP biosynthesis via salvage pathway; AMP from adenine: step 1/1. In terms of biological role, catalyzes a salvage reaction resulting in the formation of AMP, that is energically less costly than de novo synthesis. This Albidiferax ferrireducens (strain ATCC BAA-621 / DSM 15236 / T118) (Rhodoferax ferrireducens) protein is Adenine phosphoribosyltransferase.